The primary structure comprises 354 residues: Cysteine and histidine-rich domain-containing protein morgana (354 aa).

Zn(2+)-binding residues include Cys-4, Cys-9, Cys-23, His-26, Cys-41, Cys-42, Cys-58, His-63, Cys-140, Cys-145, Cys-159, His-162, Cys-177, Cys-178, Cys-194, and His-199. 2 consecutive CHORD domains span residues 4-63 and 140-199; these read CYNR…LAKH and CKNN…YGEH. In terms of domain architecture, CS spans 210–301; sequence VVQCRYDWHQ…LEPGSWSNLN (92 aa). Residues Ser-324 and Ser-339 each carry the phosphoserine modification.

As to quaternary structure, interacts with Hsp83.

Its subcellular location is the cytoplasm. The protein resides in the nucleus. The protein localises to the cytoskeleton. It localises to the spindle. In terms of biological role, regulates centrosome duplication and mitotic spindle dynamics. Also involved in controlling the size of dendritic arbors. May act as co-chaperone for Hsp83. During mitotic spindle assembly, regulates microtubule (MT) dynamics by binding to MTs and promoting MT polymerisation. Promotes the elongation and retraction of terminal branches in response to changes in body size, possibly acting downstream of the TORC2 pathway to enable proportional scaling of dendritic arbors. This chain is Cysteine and histidine-rich domain-containing protein morgana, found in Drosophila melanogaster (Fruit fly).